Consider the following 385-residue polypeptide: Carbamoyl phosphate synthase small chain (385 aa).

The tract at residues 1–196 (MEDALGQLAV…KLEKKKKFLF (196 aa)) is CPSase. L-glutamine-binding residues include serine 51, glycine 245, and glycine 247. The region spanning 197–384 (HIVVYDFGVK…IKLLNQVKFS (188 aa)) is the Glutamine amidotransferase type-1 domain. Residue cysteine 273 is the Nucleophile of the active site. Residues leucine 274, glutamine 277, asparagine 315, and phenylalanine 318 each contribute to the L-glutamine site. Residues histidine 357 and glutamate 359 contribute to the active site.

It belongs to the CarA family. Composed of two chains; the small (or glutamine) chain promotes the hydrolysis of glutamine to ammonia, which is used by the large (or ammonia) chain to synthesize carbamoyl phosphate. Tetramer of heterodimers (alpha,beta)4.

The enzyme catalyses hydrogencarbonate + L-glutamine + 2 ATP + H2O = carbamoyl phosphate + L-glutamate + 2 ADP + phosphate + 2 H(+). It catalyses the reaction L-glutamine + H2O = L-glutamate + NH4(+). It participates in amino-acid biosynthesis; L-arginine biosynthesis; carbamoyl phosphate from bicarbonate: step 1/1. The protein operates within pyrimidine metabolism; UMP biosynthesis via de novo pathway; (S)-dihydroorotate from bicarbonate: step 1/3. Functionally, small subunit of the glutamine-dependent carbamoyl phosphate synthetase (CPSase). CPSase catalyzes the formation of carbamoyl phosphate from the ammonia moiety of glutamine, carbonate, and phosphate donated by ATP, constituting the first step of 2 biosynthetic pathways, one leading to arginine and/or urea and the other to pyrimidine nucleotides. The small subunit (glutamine amidotransferase) binds and cleaves glutamine to supply the large subunit with the substrate ammonia. This chain is Carbamoyl phosphate synthase small chain, found in Buchnera aphidicola subsp. Schizaphis graminum (strain Sg).